The primary structure comprises 280 residues: Acetyl-coenzyme A carboxylase carboxyl transferase subunit beta (280 aa).

A CoA carboxyltransferase N-terminal domain is found at 26–280; sequence LWQKCPRCGE…TKLLAWHSQK (255 aa). Zn(2+) contacts are provided by Cys-30, Cys-33, Cys-49, and Cys-52. The C4-type zinc finger occupies 30–52; sequence CPRCGEIIFNKELEKNFKVCPKC.

This sequence belongs to the AccD/PCCB family. Acetyl-CoA carboxylase is a heterohexamer composed of biotin carboxyl carrier protein (AccB), biotin carboxylase (AccC) and two subunits each of ACCase subunit alpha (AccA) and ACCase subunit beta (AccD). The cofactor is Zn(2+).

It is found in the cytoplasm. The enzyme catalyses N(6)-carboxybiotinyl-L-lysyl-[protein] + acetyl-CoA = N(6)-biotinyl-L-lysyl-[protein] + malonyl-CoA. It functions in the pathway lipid metabolism; malonyl-CoA biosynthesis; malonyl-CoA from acetyl-CoA: step 1/1. Component of the acetyl coenzyme A carboxylase (ACC) complex. Biotin carboxylase (BC) catalyzes the carboxylation of biotin on its carrier protein (BCCP) and then the CO(2) group is transferred by the transcarboxylase to acetyl-CoA to form malonyl-CoA. This chain is Acetyl-coenzyme A carboxylase carboxyl transferase subunit beta, found in Carboxydothermus hydrogenoformans (strain ATCC BAA-161 / DSM 6008 / Z-2901).